We begin with the raw amino-acid sequence, 341 residues long: tRNA N6-adenosine threonylcarbamoyltransferase (341 aa).

His-115 and His-119 together coordinate Fe cation. Residues 138–142 (VVSGG), Asp-171, Gly-184, Asp-188, and Asn-279 contribute to the substrate site. A Fe cation-binding site is contributed by Asp-307.

It belongs to the KAE1 / TsaD family. Fe(2+) serves as cofactor.

The protein localises to the cytoplasm. It carries out the reaction L-threonylcarbamoyladenylate + adenosine(37) in tRNA = N(6)-L-threonylcarbamoyladenosine(37) in tRNA + AMP + H(+). Its function is as follows. Required for the formation of a threonylcarbamoyl group on adenosine at position 37 (t(6)A37) in tRNAs that read codons beginning with adenine. Is involved in the transfer of the threonylcarbamoyl moiety of threonylcarbamoyl-AMP (TC-AMP) to the N6 group of A37, together with TsaE and TsaB. TsaD likely plays a direct catalytic role in this reaction. The polypeptide is tRNA N6-adenosine threonylcarbamoyltransferase (Clostridium kluyveri (strain NBRC 12016)).